Consider the following 100-residue polypeptide: Large ribosomal subunit protein uL23c (100 aa).

Belongs to the universal ribosomal protein uL23 family. Part of the 50S ribosomal subunit.

The protein resides in the plastid. It is found in the chloroplast. Binds to 23S rRNA. This Euglena gracilis protein is Large ribosomal subunit protein uL23c (rpl23).